A 163-amino-acid polypeptide reads, in one-letter code: Type VII secretion system protein EsaG (163 aa).

In terms of assembly, interacts with EssD (via C-terminus). Interacts with EssE.

It is found in the cytoplasm. In terms of biological role, component of the type VII secretion system (Ess). Also acts as part of toxin-antitoxin system. Counteracts the toxic effect of EssD via direct interaction. The protein is Type VII secretion system protein EsaG of Staphylococcus aureus (strain NCTC 8325 / PS 47).